A 144-amino-acid polypeptide reads, in one-letter code: Interleukin-9 (144 aa).

The signal sequence occupies residues 1–18; it reads MLLAMVLTSALLLCSVAG. Q19 carries the post-translational modification Pyrrolidone carboxylic acid. 4 N-linked (GlcNAc...) asparagine glycosylation sites follow: N50, N63, N78, and N114.

The protein belongs to the IL-7/IL-9 family. Interacts with IL9R. Interacts with IL2RG.

The protein localises to the secreted. Its function is as follows. Multifunctional cytokine secreted mainly by T-helper 2 lymphocytes and also mast cells or NKT cells that plays important roles in the immune response against parasites. Affects intestinal epithelial permeability and adaptive immunity. In addition, induces the differentiation of specific T-cell subsets such as IL-17 producing helper T-cells (TH17) and also proliferation and differentiation of mast cells. Mechanistically, exerts its biological effects through a receptor composed of IL9R subunit and a signal transducing subunit IL2RG. Receptor stimulation results in the rapid activation of JAK1 and JAK3 kinase activities leading to STAT1, STAT3 and STAT5-mediated transcriptional programs. Induction of differentiation genes seems to be mediated by STAT1 alone, while protection of cells from apoptosis depends on STAT3 and STAT5. The polypeptide is Interleukin-9 (IL9) (Homo sapiens (Human)).